The primary structure comprises 489 residues: Cysteine--tRNA ligase (489 aa).

C29 is a binding site for Zn(2+). Residues 31–41 carry the 'HIGH' region motif; that stretch reads VTVYDYCHLGH. Residues C215, H240, and E244 each contribute to the Zn(2+) site. The 'KMSKS' region signature appears at 272–276; sequence KMSKS. Residue K275 participates in ATP binding.

This sequence belongs to the class-I aminoacyl-tRNA synthetase family. As to quaternary structure, monomer. The cofactor is Zn(2+).

Its subcellular location is the cytoplasm. The catalysed reaction is tRNA(Cys) + L-cysteine + ATP = L-cysteinyl-tRNA(Cys) + AMP + diphosphate. This Trichodesmium erythraeum (strain IMS101) protein is Cysteine--tRNA ligase.